The following is a 66-amino-acid chain: UPF0337 protein BA_0987/GBAA_0987/BAS0923 (66 aa).

The interval 1–22 (MSESGLKEQITGKVEKTKGQVK) is disordered. The span at 13–22 (KVEKTKGQVK) shows a compositional bias: basic and acidic residues.

Belongs to the UPF0337 (CsbD) family.

In Bacillus anthracis, this protein is UPF0337 protein BA_0987/GBAA_0987/BAS0923.